The chain runs to 337 residues: Fructose-1,6-bisphosphatase class 1 (337 aa).

The Mg(2+) site is built by Glu89, Asp112, Leu114, and Asp115. Residues 115–118 (DGSS), Asn208, Tyr241, and Lys271 each bind substrate. Mg(2+) is bound at residue Glu277.

This sequence belongs to the FBPase class 1 family. Homotetramer. Requires Mg(2+) as cofactor.

Its subcellular location is the cytoplasm. It carries out the reaction beta-D-fructose 1,6-bisphosphate + H2O = beta-D-fructose 6-phosphate + phosphate. Its pathway is carbohydrate biosynthesis; gluconeogenesis. This Yersinia enterocolitica serotype O:8 / biotype 1B (strain NCTC 13174 / 8081) protein is Fructose-1,6-bisphosphatase class 1.